Reading from the N-terminus, the 230-residue chain is Protein CbbY (230 aa).

D8 acts as the Nucleophile in catalysis. D8 and D10 together coordinate Mg(2+). D8 provides a ligand contact to substrate. D10 acts as the Proton donor in catalysis. Residues E17, 50–54 (GGKER), 75–78 (HRAK), and 115–121 (TTTSLPN) contribute to the substrate site. Mg(2+) is bound at residue D176.

Belongs to the HAD-like hydrolase superfamily. CbbY/CbbZ/Gph/YieH family. The cofactor is Mg(2+).

The catalysed reaction is D-xylulose 1,5-bisphosphate + H2O = D-xylulose 5-phosphate + phosphate. Its function is as follows. Highly selective xylulose-1,5-bisphosphate (XuBP) phosphatase. Also shows activity towards ribulose-1,5-bisphosphate (RuBP) and fructose-1,6-bisphosphate (FBP), but not towards fructose-6-phosphate (F6P) or ribulose-5-phosphate (Ru5P). Degrades xylulose-1,5-bisphosphate, a potent inhibitor of rubisco produced by the rubisco itself. This chain is Protein CbbY, found in Cereibacter sphaeroides (Rhodobacter sphaeroides).